Consider the following 163-residue polypeptide: NADH-quinone oxidoreductase subunit I (163 aa).

4Fe-4S ferredoxin-type domains are found at residues 53 to 83 (LRRY…IEAG) and 94 to 123 (VRYD…EGPN). Residues Cys-63, Cys-66, Cys-69, Cys-73, Cys-103, Cys-106, Cys-109, and Cys-113 each contribute to the [4Fe-4S] cluster site.

This sequence belongs to the complex I 23 kDa subunit family. As to quaternary structure, NDH-1 is composed of 14 different subunits. Subunits NuoA, H, J, K, L, M, N constitute the membrane sector of the complex. Requires [4Fe-4S] cluster as cofactor.

Its subcellular location is the cell inner membrane. The enzyme catalyses a quinone + NADH + 5 H(+)(in) = a quinol + NAD(+) + 4 H(+)(out). Functionally, NDH-1 shuttles electrons from NADH, via FMN and iron-sulfur (Fe-S) centers, to quinones in the respiratory chain. The immediate electron acceptor for the enzyme in this species is believed to be ubiquinone. Couples the redox reaction to proton translocation (for every two electrons transferred, four hydrogen ions are translocated across the cytoplasmic membrane), and thus conserves the redox energy in a proton gradient. The sequence is that of NADH-quinone oxidoreductase subunit I from Brucella anthropi (strain ATCC 49188 / DSM 6882 / CCUG 24695 / JCM 21032 / LMG 3331 / NBRC 15819 / NCTC 12168 / Alc 37) (Ochrobactrum anthropi).